We begin with the raw amino-acid sequence, 279 residues long: Large ribosomal subunit protein uL2 (279 aa).

The segment at 222–279 is disordered; sequence GVAMNPVDHPHGGGEGRTSGGRHPVTPAGKPTKGAKTRVNKATDKFIIRSRHKAKKGR. Basic residues predominate over residues 269 to 279; sequence IRSRHKAKKGR.

This sequence belongs to the universal ribosomal protein uL2 family. As to quaternary structure, part of the 50S ribosomal subunit. Forms a bridge to the 30S subunit in the 70S ribosome.

One of the primary rRNA binding proteins. Required for association of the 30S and 50S subunits to form the 70S ribosome, for tRNA binding and peptide bond formation. It has been suggested to have peptidyltransferase activity; this is somewhat controversial. Makes several contacts with the 16S rRNA in the 70S ribosome. The protein is Large ribosomal subunit protein uL2 of Caulobacter vibrioides (strain ATCC 19089 / CIP 103742 / CB 15) (Caulobacter crescentus).